A 275-amino-acid polypeptide reads, in one-letter code: Large ribosomal subunit protein uL2 (275 aa).

The disordered stretch occupies residues 224-275 (AMNPVDHPHGGGEGKAPIGHPGPLTPWGKPALGYKTRKKGKASDKFIIRRRK). Over residues 264–275 (KASDKFIIRRRK) the composition is skewed to basic and acidic residues.

This sequence belongs to the universal ribosomal protein uL2 family. Part of the 50S ribosomal subunit. Forms a bridge to the 30S subunit in the 70S ribosome.

Functionally, one of the primary rRNA binding proteins. Required for association of the 30S and 50S subunits to form the 70S ribosome, for tRNA binding and peptide bond formation. It has been suggested to have peptidyltransferase activity; this is somewhat controversial. Makes several contacts with the 16S rRNA in the 70S ribosome. The protein is Large ribosomal subunit protein uL2 of Thermoanaerobacter pseudethanolicus (strain ATCC 33223 / 39E) (Clostridium thermohydrosulfuricum).